Consider the following 626-residue polypeptide: KVREGLHVGTGEKVAVKVIDKKKAKKDTYVTKNLRREGQIQQMIRHPNITQLLDILETENSYYLVMELCPGGNLMHKIYEKKRLEEHEARKYIRQLILAVEHLHRAGVVHRDLKIENLLLDENNNIKLIDFGLSNCAGILGYSDPFSTQCGSPAYAAPELLARKKYGPKVDVWSIGVNMYAMLTGTLPFTVEPFSLRALYQKMVDKDMNPLPTHISPAAISCLRSLLEPDPLKRPNIQQALANRWLNDNYHGKGHHTFPNRIHLEDLSQSVVLHMSEKLGYKHSDVINVILSNRACHTLAVYFLLNWKLEHYLVNMRKPDINDNVCHKNQFHQSEKYKMNKNSYEERRSKDLEKRGEQQQQRAIPRKLEKCSPSHRQSTCLTPQGHSSSKGPIKERRSSKSERESFGGLSPFHEVRITKTGCMNSCSLEYLEIQSPDPRTPKIMRRQDSHSQETVNVNMGSRIRETHLNVVRSFESVNREDQIESLSPNHQYRVLGSPMSFSPRHSSERTLSPIFHFDNTSPLKGHSNQASFTYDDKSSPSSPESMSPTSPHSPSCNNNISGNLGSPNCVRSRGRFPMMGIGQMLRKRNQVVSPKGEKPLETRMPPLHQMSPGYASFNSSDMNGFC.

ATP-binding positions include 1-2 (KV) and K17. The Protein kinase domain maps to 1–246 (KVREGLHVGT…IQQALANRWL (246 aa)). Residue D112 is the Proton acceptor of the active site. Positions 336-357 (KYKMNKNSYEERRSKDLEKRGE) are enriched in basic and acidic residues. Disordered regions lie at residues 336–407 (KYKM…ESFG), 477–574 (VNRE…RSRG), and 590–615 (QVVS…PGYA). Residues 374 to 390 (SHRQSTCLTPQGHSSSK) are compositionally biased toward polar residues. Residues 392–405 (PIKERRSSKSERES) are compositionally biased toward basic and acidic residues. Positions 518–532 (DNTSPLKGHSNQASF) are enriched in polar residues. The span at 539-555 (SPSSPESMSPTSPHSPS) shows a compositional bias: low complexity. Residues 556–566 (CNNNISGNLGS) show a composition bias toward polar residues.

It belongs to the protein kinase superfamily. CAMK Ser/Thr protein kinase family. SNF1 subfamily. In the egg, expressed predominantly in the animal hemisphere. This pattern of expression persists throughout the cleavage and blastula stages. At the gastrula stage, expression is restricted to the ectoderm. In later-stage embryos, expressed over the entire embryonic surface including the open neural plate at stage 15 and the neural tube at stage 22. In tadpoles, strongly expressed in the neural tube, motor neurons, brain regions and sensory organs (otic vesicle and eye). Also expressed in the perisomitic mesoderm, brachial arches and embryonic epidermis of tadpoles.

It catalyses the reaction L-seryl-[protein] + ATP = O-phospho-L-seryl-[protein] + ADP + H(+). The catalysed reaction is L-threonyl-[protein] + ATP = O-phospho-L-threonyl-[protein] + ADP + H(+). The chain is Hormonally up-regulated neu tumor-associated kinase homolog B (hunk-b) from Xenopus laevis (African clawed frog).